The sequence spans 110 residues: Nucleoid-associated protein KPN78578_04440 (110 aa).

Belongs to the YbaB/EbfC family. In terms of assembly, homodimer.

The protein localises to the cytoplasm. The protein resides in the nucleoid. Its function is as follows. Binds to DNA and alters its conformation. May be involved in regulation of gene expression, nucleoid organization and DNA protection. This chain is Nucleoid-associated protein KPN78578_04440, found in Klebsiella pneumoniae subsp. pneumoniae (strain ATCC 700721 / MGH 78578).